The following is a 195-amino-acid chain: Probable DNA-directed RNA polymerase subunit delta (195 aa).

The 68-residue stretch at 14–81 (FALVEIATAI…GNNEWALRAW (68 aa)) folds into the HTH HARE-type domain. Composition is skewed to acidic residues over residues 120 to 172 (DDDV…DESI) and 181 to 195 (GGDD…DQEK). The tract at residues 120–195 (DDDVIDYNDD…DDLSDGDQEK (76 aa)) is disordered.

It belongs to the RpoE family. In terms of assembly, RNAP is composed of a core of 2 alpha, a beta and a beta' subunits. The core is associated with a delta subunit and one of several sigma factors.

Its function is as follows. Participates in both the initiation and recycling phases of transcription. In the presence of the delta subunit, RNAP displays an increased specificity of transcription, a decreased affinity for nucleic acids, and an increased efficiency of RNA synthesis because of enhanced recycling. This chain is Probable DNA-directed RNA polymerase subunit delta, found in Leuconostoc mesenteroides subsp. mesenteroides (strain ATCC 8293 / DSM 20343 / BCRC 11652 / CCM 1803 / JCM 6124 / NCDO 523 / NBRC 100496 / NCIMB 8023 / NCTC 12954 / NRRL B-1118 / 37Y).